The primary structure comprises 791 residues: Probable potassium transporter 11 (791 aa).

Topologically, residues 1 to 49 (MASLSESEGTNRGSMWELDQNLDQPMDEEASRLKNMYREKKFSSLLLLR) are cytoplasmic. Residues 50–70 (LAFQSLGVVFGDLGTSPLYVF) traverse the membrane as a helical segment. At 71–87 (YNAFPHGVDDEEDVIGA) the chain is on the extracellular side. Residues 88-108 (LSLIIYTLTLIPLLKYVFVVL) traverse the membrane as a helical segment. Over 109–175 (RANDNGQGGT…EAHAYKRNCL (67 aa)) the chain is Cytoplasmic. The chain crosses the membrane as a helical span at residues 176–196 (LIVVLIGTCTAIGDGILTPAI). The Extracellular portion of the chain corresponds to 197-215 (SVLSASGGIKVQNPNMSTD). N-linked (GlcNAc...) asparagine glycosylation occurs at Asn-211. A helical membrane pass occupies residues 216-236 (VVVIVSVIILIGLFSMQHYGT). Residues 237–238 (DK) lie on the Cytoplasmic side of the membrane. The chain crosses the membrane as a helical span at residues 239–259 (VGWLFAPIVLLWFILIGSVGA). The Extracellular portion of the chain corresponds to 260–289 (LNIHKYKGSVLKAYNPVYIYRYFQRRNSDS). Residues 290 to 310 (WASLGGIMLSITGTEALFADL) form a helical membrane-spanning segment. Over 311 to 315 (CHFPV) the chain is Cytoplasmic. Residues 316–338 (FAIQIAFTLIVFPCLLLAYTGQA) form a helical membrane-spanning segment. Topologically, residues 339 to 359 (AYIIAHKDHVADAFYRSIPDS) are extracellular. Residues 360 to 380 (IYWPAFVIATAAAIVASQATI) traverse the membrane as a helical segment. Over 381-411 (SATYSIIKQALALGCFPRVKIVHTSKKFLGQ) the chain is Cytoplasmic. The chain crosses the membrane as a helical span at residues 412-432 (IYIPDINWVLLILCIAVTAGF). At 433 to 444 (KNQSQIGNAYGT) the chain is on the extracellular side. N-linked (GlcNAc...) asparagine glycosylation is present at Asn-434. A helical membrane pass occupies residues 445–465 (AVVIVMLVTTFLMVPIMLLVW). The Cytoplasmic portion of the chain corresponds to 466 to 468 (KSH). Residues 469 to 489 (WILVVTFIVLSLMVEIPYFSA) traverse the membrane as a helical segment. Residues 490–496 (CLLKIDQ) lie on the Extracellular side of the membrane. Residues 497-517 (GGWVPLVIATAFFIIMYVWHF) form a helical membrane-spanning segment. Over 518–791 (CTVKRYEFEM…LLNVGQIYYI (274 aa)) the chain is Cytoplasmic.

This sequence belongs to the HAK/KUP transporter (TC 2.A.72.3) family.

Its subcellular location is the membrane. Functionally, high-affinity potassium transporter. This Oryza sativa subsp. japonica (Rice) protein is Probable potassium transporter 11.